A 479-amino-acid polypeptide reads, in one-letter code: F-box/LRR-repeat protein 16 (479 aa).

Residues 1–62 (MSSPGIDGDP…PTLPPPSLAA (62 aa)) are disordered. Residues 47 to 60 (CQPPPPPTLPPPSL) show a composition bias toward pro residues. The residue at position 92 (R92) is an Omega-N-methylarginine. Residues 94-139 (PLATDEKILNGLFWYFSACEKCVLAQVCKAWRRVLYQPKFWAGLTP) enclose the F-box domain. LRR repeat units lie at residues 244-266 (ITSL…ISQL), 267-290 (LPNL…YFTA), 319-343 (LPNL…LVAE), 345-369 (LRKL…YVAC), 371-395 (LHRL…YLST), 396-420 (MSSL…HLLA), and 446-470 (LQEL…YFSQ).

As to quaternary structure, interacts with SKP1 and CUL1.

Substrate-recognition component of the SCF (SKP1-CUL1-F-box protein)-type E3 ubiquitin ligase complex. This Homo sapiens (Human) protein is F-box/LRR-repeat protein 16 (FBXL16).